The following is a 261-amino-acid chain: Flap endonuclease Xni (261 aa).

Asp-105 serves as a coordination point for Mg(2+). Positions Ser-164–Ala-256 constitute a 5'-3' exonuclease domain. K(+)-binding residues include Leu-172, Ala-173, Pro-181, Ile-183, and Ile-186. The interval Gly-185 to Ser-190 is interaction with DNA.

It belongs to the Xni family. It depends on Mg(2+) as a cofactor. The cofactor is K(+).

In terms of biological role, has flap endonuclease activity. During DNA replication, flap endonucleases cleave the 5'-overhanging flap structure that is generated by displacement synthesis when DNA polymerase encounters the 5'-end of a downstream Okazaki fragment. This chain is Flap endonuclease Xni, found in Shewanella oneidensis (strain ATCC 700550 / JCM 31522 / CIP 106686 / LMG 19005 / NCIMB 14063 / MR-1).